The sequence spans 380 residues: Chorismate synthase (380 aa).

Positions 48 and 53 each coordinate NADP(+). FMN is bound by residues Arg-126 to Ser-128, Gly-284, Lys-299 to Ser-303, and Arg-326.

The protein belongs to the chorismate synthase family. It depends on FMNH2 as a cofactor.

It catalyses the reaction 5-O-(1-carboxyvinyl)-3-phosphoshikimate = chorismate + phosphate. Its pathway is metabolic intermediate biosynthesis; chorismate biosynthesis; chorismate from D-erythrose 4-phosphate and phosphoenolpyruvate: step 7/7. Catalyzes the anti-1,4-elimination of the C-3 phosphate and the C-6 proR hydrogen from 5-enolpyruvylshikimate-3-phosphate (EPSP) to yield chorismate, which is the branch point compound that serves as the starting substrate for the three terminal pathways of aromatic amino acid biosynthesis. This reaction introduces a second double bond into the aromatic ring system. The chain is Chorismate synthase from Ignicoccus hospitalis (strain KIN4/I / DSM 18386 / JCM 14125).